Here is a 412-residue protein sequence, read N- to C-terminus: tRNA (guanine-N(7)-)-methyltransferase non-catalytic subunit WDR4 (412 aa).

Alanine 2 is subject to N-acetylalanine. WD repeat units lie at residues 3–40 (GSVG…IYDC), 50–90 (NKGE…LFRT), 94–131 (QCLS…SFSV), 137–174 (CGRL…VSWA), 180–218 (IESF…LWEY), 230–273 (ASLQ…IFQL), and 319–373 (PVGD…SYLK). A disordered region spans residues 377–412 (ERLQQQLEKKQRRRSPPPGPDGHAKKMRPGEATLSC). Phosphoserine occurs at positions 391 and 411.

Belongs to the WD repeat TRM82 family. In terms of assembly, non-catalytic component of the METTL1-WDR4 complex, composed of METTL1 and WDR4. Interacts with FEN1; the interaction is direct.

It is found in the nucleus. It localises to the chromosome. The protein operates within tRNA modification; N(7)-methylguanine-tRNA biosynthesis. Its function is as follows. Non-catalytic component of the METTL1-WDR4 methyltransferase complex required for the formation of N(7)-methylguanine in a subset of RNA species, such as tRNAs, mRNAs and microRNAs (miRNAs). In the METTL1-WDR4 methyltransferase complex, WDR4 acts as a scaffold for tRNA-binding. Required for the formation of N(7)-methylguanine at position 46 (m7G46) in a large subset of tRNAs that contain the 5'-RAGGU-3' motif within the variable loop. M7G46 interacts with C13-G22 in the D-loop to stabilize tRNA tertiary structure and protect tRNAs from decay. Also required for the formation of N(7)-methylguanine at internal sites in a subset of mRNAs. Also required for methylation of a specific subset of miRNAs, such as let-7. Independently of METTL1, also plays a role in genome stability: localizes at the DNA replication site and regulates endonucleolytic activities of FEN1. This chain is tRNA (guanine-N(7)-)-methyltransferase non-catalytic subunit WDR4, found in Homo sapiens (Human).